We begin with the raw amino-acid sequence, 185 residues long: Elongation factor P (185 aa).

The protein belongs to the elongation factor P family.

It localises to the cytoplasm. The protein operates within protein biosynthesis; polypeptide chain elongation. Functionally, involved in peptide bond synthesis. Stimulates efficient translation and peptide-bond synthesis on native or reconstituted 70S ribosomes in vitro. Probably functions indirectly by altering the affinity of the ribosome for aminoacyl-tRNA, thus increasing their reactivity as acceptors for peptidyl transferase. In Oleidesulfovibrio alaskensis (strain ATCC BAA-1058 / DSM 17464 / G20) (Desulfovibrio alaskensis), this protein is Elongation factor P.